Reading from the N-terminus, the 198-residue chain is Probable nicotinate-nucleotide adenylyltransferase (198 aa).

The protein belongs to the NadD family.

It carries out the reaction nicotinate beta-D-ribonucleotide + ATP + H(+) = deamido-NAD(+) + diphosphate. Its pathway is cofactor biosynthesis; NAD(+) biosynthesis; deamido-NAD(+) from nicotinate D-ribonucleotide: step 1/1. In terms of biological role, catalyzes the reversible adenylation of nicotinate mononucleotide (NaMN) to nicotinic acid adenine dinucleotide (NaAD). This Albidiferax ferrireducens (strain ATCC BAA-621 / DSM 15236 / T118) (Rhodoferax ferrireducens) protein is Probable nicotinate-nucleotide adenylyltransferase.